Consider the following 809-residue polypeptide: Leucine--tRNA ligase (809 aa).

Residues Pro40–His50 carry the 'HIGH' region motif. The 'KMSKS' region signature appears at Lys579–Ser583. Position 582 (Lys582) interacts with ATP.

The protein belongs to the class-I aminoacyl-tRNA synthetase family.

The protein localises to the cytoplasm. The catalysed reaction is tRNA(Leu) + L-leucine + ATP = L-leucyl-tRNA(Leu) + AMP + diphosphate. The sequence is that of Leucine--tRNA ligase from Campylobacter jejuni subsp. doylei (strain ATCC BAA-1458 / RM4099 / 269.97).